A 116-amino-acid polypeptide reads, in one-letter code: Ribosome-binding factor A (116 aa).

The protein belongs to the RbfA family. Monomer. Binds 30S ribosomal subunits, but not 50S ribosomal subunits or 70S ribosomes.

The protein localises to the cytoplasm. In terms of biological role, one of several proteins that assist in the late maturation steps of the functional core of the 30S ribosomal subunit. Associates with free 30S ribosomal subunits (but not with 30S subunits that are part of 70S ribosomes or polysomes). Required for efficient processing of 16S rRNA. May interact with the 5'-terminal helix region of 16S rRNA. The protein is Ribosome-binding factor A of Streptococcus pyogenes serotype M3 (strain SSI-1).